A 179-amino-acid chain; its full sequence is Bifunctional protein PyrR (179 aa).

A PRPP-binding motif is present at residues 100–112 (VILIDDVLFTGRT).

It belongs to the purine/pyrimidine phosphoribosyltransferase family. PyrR subfamily.

It catalyses the reaction UMP + diphosphate = 5-phospho-alpha-D-ribose 1-diphosphate + uracil. Its function is as follows. Regulates the transcription of the pyrimidine nucleotide (pyr) operon in response to exogenous pyrimidines. In terms of biological role, also displays a weak uracil phosphoribosyltransferase activity which is not physiologically significant. This Mannheimia succiniciproducens (strain KCTC 0769BP / MBEL55E) protein is Bifunctional protein PyrR.